Consider the following 108-residue polypeptide: Putative pterin-4-alpha-carbinolamine dehydratase (108 aa).

The protein belongs to the pterin-4-alpha-carbinolamine dehydratase family.

It carries out the reaction (4aS,6R)-4a-hydroxy-L-erythro-5,6,7,8-tetrahydrobiopterin = (6R)-L-erythro-6,7-dihydrobiopterin + H2O. The sequence is that of Putative pterin-4-alpha-carbinolamine dehydratase from Chromobacterium violaceum (strain ATCC 12472 / DSM 30191 / JCM 1249 / CCUG 213 / NBRC 12614 / NCIMB 9131 / NCTC 9757 / MK).